Consider the following 674-residue polypeptide: MANPASYRPRTGEIPTNPGVYRFRDPHGRVIYVGKAKSLRSRLNSYFANPAGLLPKTYAMVHAASSVEWTVVGSELESLQLEYTWIKEFKPRFNVVFRDDKTYPYLAVTLGEKYPRVQVMRGDKRKGTRYFGPYTAGAIRETMDTLLRVFPVRSCSAGVFKRAESSGRPCLLGYIDKCSAPCVGRISPEDHRALAEDFCAFMGGEAKRFTNKLEKQMAAAVARLDYEQAARIRDDITALRKVFERNAVVLAEDTDADVFALHEDELEAAVQVFHVRGGRIRGQRGWVVEKVEDFTTPDLVEHLLQQVYGEDGETHGRLPREVLVPVAPSNAEELTEWLSGIRGARVDVRVPQRGDKAALMSTVRENAEHALKLHKTRRAGDLTVRSQALQELQEALDLPVPLLRIECFDVSHVQGTNVVASMVVVEDGLPKKSDYRKFSITGPAASDDTAAMHDVLTRRFRHYLQDKSAQVDEDVLEAGTAEAAAEAAADAAAEAAVADTTTPIPKTKFAYPPNLVVVDGGQPQVNAAARALADLGIDDVYVVGLAKRLEEVWLPDSDFPVILPRTSQGLYLLQRIRDEAHRFAISFHRQKRGKAMTVSALDGVPGLGASKRKALLAHFGSVKGVKAATPEELAQAKGIGPALAAAIVSHFTGGGPAAVTVPAINMTTGEIIET.

Residues 16 to 95 form the GIY-YIG domain; that stretch reads TNPGVYRFRD…IKEFKPRFNV (80 aa). One can recognise a UVR domain in the interval 207-242; that stretch reads KRFTNKLEKQMAAAVARLDYEQAARIRDDITALRKV.

The protein belongs to the UvrC family. As to quaternary structure, interacts with UvrB in an incision complex.

The protein localises to the cytoplasm. The UvrABC repair system catalyzes the recognition and processing of DNA lesions. UvrC both incises the 5' and 3' sides of the lesion. The N-terminal half is responsible for the 3' incision and the C-terminal half is responsible for the 5' incision. The sequence is that of UvrABC system protein C from Pseudarthrobacter chlorophenolicus (strain ATCC 700700 / DSM 12829 / CIP 107037 / JCM 12360 / KCTC 9906 / NCIMB 13794 / A6) (Arthrobacter chlorophenolicus).